We begin with the raw amino-acid sequence, 524 residues long: GMP synthase [glutamine-hydrolyzing] (524 aa).

The 191-residue stretch at 5–195 (KVIVIDFGGQ…VRGVCGCAGT (191 aa)) folds into the Glutamine amidotransferase type-1 domain. The Nucleophile role is filled by Cys82. Active-site residues include His169 and Glu171. The 194-residue stretch at 196–389 (WKMDAFVENT…LGIPEHLVFR (194 aa)) folds into the GMPS ATP-PPase domain. 223–229 (SGGVDSS) serves as a coordination point for ATP.

In terms of assembly, homodimer.

The enzyme catalyses XMP + L-glutamine + ATP + H2O = GMP + L-glutamate + AMP + diphosphate + 2 H(+). It participates in purine metabolism; GMP biosynthesis; GMP from XMP (L-Gln route): step 1/1. Catalyzes the synthesis of GMP from XMP. In Lachnospira eligens (strain ATCC 27750 / DSM 3376 / VPI C15-48 / C15-B4) (Eubacterium eligens), this protein is GMP synthase [glutamine-hydrolyzing].